The chain runs to 205 residues: Small ribosomal subunit protein bS16 (205 aa).

The tract at residues 110–205 is disordered; it reads GEEVKIAVGT…ADDNEEPEDE (96 aa). Basic and acidic residues predominate over residues 123–132; it reads DPLERERERA. Acidic residues predominate over residues 153 to 205; that stretch reads EETEAEEAEDVETADAEDADAASETDEPEAAADEADETDASADADDNEEPEDE.

The protein belongs to the bacterial ribosomal protein bS16 family.

The sequence is that of Small ribosomal subunit protein bS16 from Salinibacter ruber (strain DSM 13855 / M31).